A 270-amino-acid polypeptide reads, in one-letter code: Fibroblast growth factor 5 (270 aa).

The first 20 residues, 1–20, serve as a signal peptide directing secretion; the sequence is MSLSLLLLLFLSHLILSAWA. The interval 26–84 is disordered; it reads LAPKGQPGPAATGRNPGGAGGSSTSGGTTSSSSSSVSSAPGASPGIRGSGSEQGSFQWS. Over residues 40–49 the composition is skewed to gly residues; it reads NPGGAGGSST. Low complexity predominate over residues 50-70; sequence SGGTTSSSSSSVSSAPGASPG. The segment covering 75–84 has biased composition (polar residues); sequence GSEQGSFQWS. N112 carries N-linked (GlcNAc...) asparagine glycosylation. Residues 237 to 257 are disordered; sequence EKKKPPSHVKPKVPLSAPRKS.

It belongs to the heparin-binding growth factors family. Interacts with FGFR1 and FGFR2. Affinity between fibroblast growth factors (FGFs) and their receptors is increased by heparan sulfate glycosaminoglycans that function as coreceptors.

The protein localises to the secreted. Functionally, plays an important role in the regulation of cell proliferation and cell differentiation. Required for normal regulation of the hair growth cycle. Functions as an inhibitor of hair elongation by promoting progression from anagen, the growth phase of the hair follicle, into catagen the apoptosis-induced regression phase. The polypeptide is Fibroblast growth factor 5 (FGF5) (Canis lupus familiaris (Dog)).